An 85-amino-acid polypeptide reads, in one-letter code: UPF0181 protein YPO1774/y2534/YP_1619 (85 aa).

The segment at 50 to 85 (QAMAIFEDHDFDEHTESDYRRDDEPDADDIEDPYEG) is disordered. Residues 55 to 72 (FEDHDFDEHTESDYRRDD) show a composition bias toward basic and acidic residues. Residues 73–85 (EPDADDIEDPYEG) are compositionally biased toward acidic residues.

Belongs to the UPF0181 family.

The protein is UPF0181 protein YPO1774/y2534/YP_1619 of Yersinia pestis.